Consider the following 179-residue polypeptide: Large ribosomal subunit protein uL5 (179 aa).

This sequence belongs to the universal ribosomal protein uL5 family. In terms of assembly, part of the 50S ribosomal subunit; part of the 5S rRNA/L5/L18/L25 subcomplex. Contacts the 5S rRNA and the P site tRNA. Forms a bridge to the 30S subunit in the 70S ribosome.

Its function is as follows. This is one of the proteins that bind and probably mediate the attachment of the 5S RNA into the large ribosomal subunit, where it forms part of the central protuberance. In the 70S ribosome it contacts protein S13 of the 30S subunit (bridge B1b), connecting the 2 subunits; this bridge is implicated in subunit movement. Contacts the P site tRNA; the 5S rRNA and some of its associated proteins might help stabilize positioning of ribosome-bound tRNAs. The chain is Large ribosomal subunit protein uL5 from Pseudomonas entomophila (strain L48).